A 705-amino-acid polypeptide reads, in one-letter code: Methionine--tRNA ligase (705 aa).

Positions 17-27 match the 'HIGH' region motif; the sequence is PYANGPVHLGH. Residues cysteine 149, cysteine 152, cysteine 162, and cysteine 165 each contribute to the Zn(2+) site. The 'KMSKS' region signature appears at 347–351; sequence KFSKS. Lysine 350 contacts ATP. One can recognise a tRNA-binding domain in the interval 604-705; sequence EFQKVDLRVA…GEGINGQSVQ (102 aa).

This sequence belongs to the class-I aminoacyl-tRNA synthetase family. MetG type 1 subfamily. Homodimer. Zn(2+) is required as a cofactor.

The protein localises to the cytoplasm. The catalysed reaction is tRNA(Met) + L-methionine + ATP = L-methionyl-tRNA(Met) + AMP + diphosphate. Is required not only for elongation of protein synthesis but also for the initiation of all mRNA translation through initiator tRNA(fMet) aminoacylation. The polypeptide is Methionine--tRNA ligase (Chlorobium chlorochromatii (strain CaD3)).